Reading from the N-terminus, the 46-residue chain is Protein PsbN (46 aa).

A helical membrane pass occupies residues 7–27 (GLSIAITFAVILLALTGFSIY).

It belongs to the PsbN family.

It is found in the cellular thylakoid membrane. In terms of biological role, may play a role in photosystem I and II biogenesis. The chain is Protein PsbN from Synechococcus elongatus (strain ATCC 33912 / PCC 7942 / FACHB-805) (Anacystis nidulans R2).